A 157-amino-acid chain; its full sequence is Putative pre-16S rRNA nuclease (157 aa).

The protein belongs to the YqgF nuclease family.

The protein localises to the cytoplasm. In terms of biological role, could be a nuclease involved in processing of the 5'-end of pre-16S rRNA. The chain is Putative pre-16S rRNA nuclease from Parasynechococcus marenigrum (strain WH8102).